The chain runs to 240 residues: UDP-2,3-diacylglucosamine hydrolase (240 aa).

Positions 8, 10, 41, 79, and 114 each coordinate Mn(2+). Position 79 to 80 (79 to 80) interacts with substrate; that stretch reads NR. Substrate is bound by residues Asp122, Ser160, Asn164, Lys167, and His195. Mn(2+) is bound by residues His195 and His197.

This sequence belongs to the LpxH family. Requires Mn(2+) as cofactor.

Its subcellular location is the cell inner membrane. The enzyme catalyses UDP-2-N,3-O-bis[(3R)-3-hydroxytetradecanoyl]-alpha-D-glucosamine + H2O = 2-N,3-O-bis[(3R)-3-hydroxytetradecanoyl]-alpha-D-glucosaminyl 1-phosphate + UMP + 2 H(+). It functions in the pathway glycolipid biosynthesis; lipid IV(A) biosynthesis; lipid IV(A) from (3R)-3-hydroxytetradecanoyl-[acyl-carrier-protein] and UDP-N-acetyl-alpha-D-glucosamine: step 4/6. In terms of biological role, hydrolyzes the pyrophosphate bond of UDP-2,3-diacylglucosamine to yield 2,3-diacylglucosamine 1-phosphate (lipid X) and UMP by catalyzing the attack of water at the alpha-P atom. Involved in the biosynthesis of lipid A, a phosphorylated glycolipid that anchors the lipopolysaccharide to the outer membrane of the cell. The chain is UDP-2,3-diacylglucosamine hydrolase from Escherichia coli (strain UTI89 / UPEC).